Consider the following 443-residue polypeptide: D-serine dehydratase (443 aa).

Residue Lys118 is modified to N6-(pyridoxal phosphate)lysine.

This sequence belongs to the serine/threonine dehydratase family. DsdA subfamily. In terms of assembly, monomer. Requires pyridoxal 5'-phosphate as cofactor.

It carries out the reaction D-serine = pyruvate + NH4(+). This chain is D-serine dehydratase, found in Photorhabdus laumondii subsp. laumondii (strain DSM 15139 / CIP 105565 / TT01) (Photorhabdus luminescens subsp. laumondii).